We begin with the raw amino-acid sequence, 631 residues long: Nucleoside triphosphatase I (631 aa).

Residues 42 to 204 form the Helicase ATP-binding domain; that stretch reads FLGLDSMHSL…TMLVNLLRPG (163 aa). 55-62 serves as a coordination point for ATP; the sequence is HETGVGKT. Positions 141-144 match the DEXH box motif; the sequence is DECH. The 166-residue stretch at 367 to 532 folds into the Helicase C-terminal domain; it reads KFIDVCLGIL…EFVQLFRVFK (166 aa). A binding to the cap-specific mRNA (nucleoside-2'-O-)-methyltransferase region spans residues 457–524; the sequence is DIFILDMTWN…EIIQSKSKEF (68 aa).

The protein belongs to the helicase family. NPH I subfamily. As to quaternary structure, monomer. Interacts (via C-terminus) with RAP94/OPG109 (via N-terminus). Interacts with the cap-specific mRNA (nucleoside-2'-O-)-methyltransferase OPG102.

The protein localises to the virion. It carries out the reaction a ribonucleoside 5'-triphosphate + H2O = a ribonucleoside 5'-diphosphate + phosphate + H(+). DNA-dependent ATPase that acts as a 5' to 3' translocase on single-stranded DNA and thereby plays a role in transcription termination of viral early genes. Uses forward translocation in concert with the viral RNA polymerase RAP94/OPG109 subunit and the capping enzyme/VTF to catalyze release of UUUUUNU-containing nascent RNA from the elongation complex. In addition, acts as a positive elongation factor to assist transcription through problematic sequences. This Bos taurus (Bovine) protein is Nucleoside triphosphatase I (OPG123).